Reading from the N-terminus, the 435-residue chain is Enolase (435 aa).

Residue glutamine 167 participates in (2R)-2-phosphoglycerate binding. The active-site Proton donor is glutamate 209. Positions 246, 291, and 318 each coordinate Mg(2+). (2R)-2-phosphoglycerate-binding residues include lysine 343, arginine 372, serine 373, and lysine 394. Residue lysine 343 is the Proton acceptor of the active site.

Belongs to the enolase family. Component of the RNA degradosome, a multiprotein complex involved in RNA processing and mRNA degradation. Mg(2+) is required as a cofactor.

It is found in the cytoplasm. Its subcellular location is the secreted. It localises to the cell surface. The catalysed reaction is (2R)-2-phosphoglycerate = phosphoenolpyruvate + H2O. It functions in the pathway carbohydrate degradation; glycolysis; pyruvate from D-glyceraldehyde 3-phosphate: step 4/5. Catalyzes the reversible conversion of 2-phosphoglycerate (2-PG) into phosphoenolpyruvate (PEP). It is essential for the degradation of carbohydrates via glycolysis. The sequence is that of Enolase from Psychromonas ingrahamii (strain DSM 17664 / CCUG 51855 / 37).